The following is a 190-amino-acid chain: dCTP deaminase (190 aa).

Lys-113–Arg-118 is a dCTP binding site. Glu-139 functions as the Proton donor/acceptor in the catalytic mechanism. DCTP-binding residues include Gln-158, Tyr-172, Lys-181, and Gln-182.

The protein belongs to the dCTP deaminase family. As to quaternary structure, homotrimer.

It carries out the reaction dCTP + H2O + H(+) = dUTP + NH4(+). It participates in pyrimidine metabolism; dUMP biosynthesis; dUMP from dCTP (dUTP route): step 1/2. In terms of biological role, catalyzes the deamination of dCTP to dUTP. This is dCTP deaminase from Chlamydia trachomatis serovar L2 (strain ATCC VR-902B / DSM 19102 / 434/Bu).